The chain runs to 439 residues: Capsid vertex component 1 (439 aa).

Belongs to the herpesviridae CVC1 protein family. In terms of assembly, interacts (via C-terminus) with capsid vertex component 2/CVC2.

The protein resides in the virion. Its subcellular location is the host nucleus. In terms of biological role, capsid vertex-specific component that plays a role during viral DNA encapsidation, assuring correct genome cleavage and presumably stabilizing capsids that contain full-length viral genomes. The chain is Capsid vertex component 1 from Homo sapiens (Human).